Consider the following 169-residue polypeptide: NADH-quinone oxidoreductase subunit B (169 aa).

The [4Fe-4S] cluster site is built by Cys45, Cys46, Cys111, and Cys141.

The protein belongs to the complex I 20 kDa subunit family. As to quaternary structure, NDH-1 is composed of 14 different subunits. Subunits NuoB, C, D, E, F, and G constitute the peripheral sector of the complex. Requires [4Fe-4S] cluster as cofactor.

It localises to the cell membrane. The enzyme catalyses a quinone + NADH + 5 H(+)(in) = a quinol + NAD(+) + 4 H(+)(out). Functionally, NDH-1 shuttles electrons from NADH, via FMN and iron-sulfur (Fe-S) centers, to quinones in the respiratory chain. The immediate electron acceptor for the enzyme in this species is believed to be a menaquinone. Couples the redox reaction to proton translocation (for every two electrons transferred, four hydrogen ions are translocated across the cytoplasmic membrane), and thus conserves the redox energy in a proton gradient. The sequence is that of NADH-quinone oxidoreductase subunit B from Clostridium beijerinckii (strain ATCC 51743 / NCIMB 8052) (Clostridium acetobutylicum).